Reading from the N-terminus, the 51-residue chain is Large ribosomal subunit protein eL39 (51 aa).

The tract at residues 32–51 (KGSVKQHPKMRHWRRKNLKK) is disordered. A compositionally biased stretch (basic residues) spans 33 to 51 (GSVKQHPKMRHWRRKNLKK).

It belongs to the eukaryotic ribosomal protein eL39 family.

The chain is Large ribosomal subunit protein eL39 from Methanococcus maripaludis (strain C5 / ATCC BAA-1333).